A 226-amino-acid chain; its full sequence is Phosphoheptose isomerase (226 aa).

Positions 50 to 212 (IAGVFETGGK…ERMMGYGTEC (163 aa)) constitute an SIS domain. Position 65–67 (65–67 (NGG)) interacts with substrate. 2 residues coordinate Zn(2+): H74 and E78. Residues E78, 109-110 (ND), 135-137 (STS), S140, and Q188 each bind substrate. Zn(2+) contacts are provided by Q188 and H196.

It belongs to the SIS family. GmhA subfamily. Zn(2+) serves as cofactor.

It localises to the cytoplasm. It carries out the reaction 2 D-sedoheptulose 7-phosphate = D-glycero-alpha-D-manno-heptose 7-phosphate + D-glycero-beta-D-manno-heptose 7-phosphate. It functions in the pathway carbohydrate biosynthesis; D-glycero-D-manno-heptose 7-phosphate biosynthesis; D-glycero-alpha-D-manno-heptose 7-phosphate and D-glycero-beta-D-manno-heptose 7-phosphate from sedoheptulose 7-phosphate: step 1/1. In terms of biological role, catalyzes the isomerization of sedoheptulose 7-phosphate in D-glycero-D-manno-heptose 7-phosphate. This is Phosphoheptose isomerase from Chlorobium phaeobacteroides (strain DSM 266 / SMG 266 / 2430).